Reading from the N-terminus, the 342-residue chain is N-acetyl-gamma-glutamyl-phosphate reductase (342 aa).

Cys-149 is an active-site residue.

It belongs to the NAGSA dehydrogenase family. Type 1 subfamily.

It localises to the cytoplasm. The enzyme catalyses N-acetyl-L-glutamate 5-semialdehyde + phosphate + NADP(+) = N-acetyl-L-glutamyl 5-phosphate + NADPH + H(+). It participates in amino-acid biosynthesis; L-arginine biosynthesis; N(2)-acetyl-L-ornithine from L-glutamate: step 3/4. Its function is as follows. Catalyzes the NADPH-dependent reduction of N-acetyl-5-glutamyl phosphate to yield N-acetyl-L-glutamate 5-semialdehyde. This Nitrosospira multiformis (strain ATCC 25196 / NCIMB 11849 / C 71) protein is N-acetyl-gamma-glutamyl-phosphate reductase.